The following is a 320-amino-acid chain: Adhesin MafA 3 (320 aa).

An N-terminal signal peptide occupies residues 1–18 (MQARLLIPILFSVFILSA). Cysteine 19 carries N-palmitoyl cysteine lipidation. Residue cysteine 19 is the site of S-diacylglycerol cysteine attachment. Over residues 288–298 (HTGNSAPSVET) the composition is skewed to polar residues. The segment at 288 to 320 (HTGNSAPSVETDNSHEGYGYSDEVVRQHRQGQP) is disordered.

Belongs to the MafA family.

The protein resides in the cell outer membrane. In Neisseria meningitidis serogroup C / serotype 2a (strain ATCC 700532 / DSM 15464 / FAM18), this protein is Adhesin MafA 3 (mafA3).